The primary structure comprises 159 residues: Ribosomal RNA large subunit methyltransferase H (159 aa).

S-adenosyl-L-methionine-binding positions include Leu-76, Gly-108, and 127 to 132 (FSKMTF).

Belongs to the RNA methyltransferase RlmH family. Homodimer.

Its subcellular location is the cytoplasm. It carries out the reaction pseudouridine(1915) in 23S rRNA + S-adenosyl-L-methionine = N(3)-methylpseudouridine(1915) in 23S rRNA + S-adenosyl-L-homocysteine + H(+). In terms of biological role, specifically methylates the pseudouridine at position 1915 (m3Psi1915) in 23S rRNA. This Bifidobacterium adolescentis (strain ATCC 15703 / DSM 20083 / NCTC 11814 / E194a) protein is Ribosomal RNA large subunit methyltransferase H.